Reading from the N-terminus, the 170-residue chain is Urease accessory protein UreE (170 aa).

The tract at residues 144-170 (GGHSHDDHDHHHGHHEHDHEHHHHHHD) is disordered. Residues 146–162 (HSHDDHDHHHGHHEHDH) show a composition bias toward basic and acidic residues.

This sequence belongs to the UreE family.

The protein resides in the cytoplasm. Its function is as follows. Involved in urease metallocenter assembly. Binds nickel. Probably functions as a nickel donor during metallocenter assembly. The polypeptide is Urease accessory protein UreE (Brucella anthropi (strain ATCC 49188 / DSM 6882 / CCUG 24695 / JCM 21032 / LMG 3331 / NBRC 15819 / NCTC 12168 / Alc 37) (Ochrobactrum anthropi)).